Here is a 228-residue protein sequence, read N- to C-terminus: Translation initiation factor 6 (228 aa).

Its function is as follows. Binds to the 50S ribosomal subunit and prevents its association with the 30S ribosomal subunit to form the 70S initiation complex. The chain is Translation initiation factor 6 from Methanocaldococcus jannaschii (strain ATCC 43067 / DSM 2661 / JAL-1 / JCM 10045 / NBRC 100440) (Methanococcus jannaschii).